The primary structure comprises 450 residues: Tubulin alpha-5 chain (450 aa).

7 residues coordinate GTP: glutamine 11, glutamate 71, glycine 144, threonine 145, threonine 179, asparagine 206, and asparagine 228. Glutamate 71 contacts Mg(2+). Residue glutamate 254 is part of the active site.

It belongs to the tubulin family. Dimer of alpha and beta chains. A typical microtubule is a hollow water-filled tube with an outer diameter of 25 nm and an inner diameter of 15 nM. Alpha-beta heterodimers associate head-to-tail to form protofilaments running lengthwise along the microtubule wall with the beta-tubulin subunit facing the microtubule plus end conferring a structural polarity. Microtubules usually have 13 protofilaments but different protofilament numbers can be found in some organisms and specialized cells. Requires Mg(2+) as cofactor. In terms of processing, undergoes a tyrosination/detyrosination cycle, the cyclic removal and re-addition of a C-terminal tyrosine residue by the enzymes tubulin tyrosine carboxypeptidase (TTCP) and tubulin tyrosine ligase (TTL), respectively.

The protein localises to the cytoplasm. The protein resides in the cytoskeleton. The enzyme catalyses GTP + H2O = GDP + phosphate + H(+). Its function is as follows. Tubulin is the major constituent of microtubules, a cylinder consisting of laterally associated linear protofilaments composed of alpha- and beta-tubulin heterodimers. Microtubules grow by the addition of GTP-tubulin dimers to the microtubule end, where a stabilizing cap forms. Below the cap, tubulin dimers are in GDP-bound state, owing to GTPase activity of alpha-tubulin. In Zea mays (Maize), this protein is Tubulin alpha-5 chain (TUBA5).